The primary structure comprises 523 residues: MGYGTRKLSDEYEVSEILGRGGFSVVRKGTKKSSIEEEKSQSQVAIKTLRRLGASNNPSGLPRKKDIGEKSTIGFPTMRQVSVSDTLLTNEILVMRRIVENVSPHPNVIDLYDVYEDTNGVHLVLELCSGGELFDRIVAQDKYSETEAATVVHQIASGLEAVHRANIVHRDLKPENCLFLDVRKDSPLKIMDFGLSSVEEFTDPVVGLFGSIDYVSPEALSQGKITTKSDMWSLGVILYILLSGYPPFIAQNNRQKQQMIMNGNFSFYEKTWKGISQPAKNLISSLLTVDPSKRPSALELLSDPWVKGEKAKDVQMDPEIVSRLQSFNARRKLRAAAIASVWSSTIFLRTKKLKSLVGSYDLKEEEIENLRMHFKKICADRDNATLSEFEEVLKAMNMLSLIPFASRIFDLFDNNRDGTVDMREILCGFSSLKNSKGEDALRLCFQMYDTDRSGCISKEEVASMLRALPYDCLPTDITEPGKLDEIFDLMDANNDGKVTFDEFKAAMQRDSSLQDVVLSSIRP.

The 295-residue stretch at 12–306 folds into the Protein kinase domain; sequence YEVSEILGRG…ALELLSDPWV (295 aa). ATP contacts are provided by residues 18–26 and lysine 47; that span reads LGRGGFSVV. Aspartate 171 acts as the Proton acceptor in catalysis. A Phosphothreonine modification is found at threonine 271. The segment at 329 to 342 is calmodulin-binding; sequence ARRKLRAAAIASVW. 3 EF-hand domains span residues 400 to 435, 436 to 471, and 478 to 513; these read SLIPFASRIFDLFDNNRDGTVDMREILCGFSSLKNS, KGEDALRLCFQMYDTDRSGCISKEEVASMLRALPYD, and TEPGKLDEIFDLMDANNDGKVTFDEFKAAMQRDSSL. Ca(2+) is bound by residues aspartate 413, asparagine 415, aspartate 417, threonine 419, glutamate 424, aspartate 449, aspartate 451, serine 453, cysteine 455, glutamate 460, aspartate 491, asparagine 493, aspartate 495, lysine 497, and glutamate 502.

It belongs to the protein kinase superfamily. CAMK Ser/Thr protein kinase family. CaMK subfamily. Interacts with IPD3. Post-translationally, autophosphorylation. Highly expressed in roots. Expressed in root hairs and nodules. Expressed at low levels in flowers. Not detected in leaves or stems.

The protein localises to the nucleus. It carries out the reaction L-seryl-[protein] + ATP = O-phospho-L-seryl-[protein] + ADP + H(+). The enzyme catalyses L-threonyl-[protein] + ATP = O-phospho-L-threonyl-[protein] + ADP + H(+). Its activity is regulated as follows. Activated by calcium. Autophosphorylation may play an important role in the regulation of the kinase activity. During nodulation, plays a central role in bacterial infection and contributes to nodule organogenesis. Protein kinase that recognizes the calcium spiking induced by Nod factors and translates this signal to components controlling nodulation and mycorrhizal infection responses. May phosphorylate the NSP1 protein. Required in epidermal and cortical cells to promote infection thread (IT) formation in root hairs. The sequence is that of Calcium and calcium/calmodulin-dependent serine/threonine-protein kinase DMI-3 from Medicago truncatula (Barrel medic).